The following is a 295-amino-acid chain: MSVERWVFPGCSVMARFRRGLSDLGGRVRNIGDVMEHPLVELGVSYAALLSVIVVVVEYTMQLSGEYLVRLYLVDLILVIILWADYAYRAYKSGDPAGYVKKTLYEIPALVPAGLLALIEGHLAGLGLFRLVRLLRFLRILLIISRGSKFLSAIADAADKIRFYHLFGAVMLTVLYGAFAIYIVEYPDPNSSIKSVFDALWWAVVTATTVGYGDVVPATPIGKVIGIAVMLTGISALTLLIGTVSNMFQKILVGEPEPSCSPAKLAEMVSSMSEEEFEEFVRTLKNLRRLENSMK.

The Cytoplasmic segment spans residues 1–38; it reads MSVERWVFPGCSVMARFRRGLSDLGGRVRNIGDVMEHP. The helical transmembrane segment at 39 to 63 threads the bilayer; sequence LVELGVSYAALLSVIVVVVEYTMQL. Residues 64–67 are Extracellular-facing; the sequence is SGEY. Residues 68–92 traverse the membrane as a helical segment; the sequence is LVRLYLVDLILVIILWADYAYRAYK. Residues 93 to 96 lie on the Cytoplasmic side of the membrane; that stretch reads SGDP. The segment at residues 97-105 is an intramembrane region (helical); it reads AGYVKKTLY. Residues 106-108 are Extracellular-facing; that stretch reads EIP. Residues 109-125 traverse the membrane as a helical; Voltage-sensor segment; the sequence is ALVPAGLLALIEGHLAG. Topologically, residues 126–128 are cytoplasmic; sequence LGL. A helical; Voltage-sensor transmembrane segment spans residues 129 to 145; that stretch reads FRLVRLLRFLRILLIIS. Residues 146-159 are Cytoplasmic-facing; sequence RGSKFLSAIADAAD. The chain crosses the membrane as a helical span at residues 160–184; it reads KIRFYHLFGAVMLTVLYGAFAIYIV. Residues 185-195 are Extracellular-facing; the sequence is EYPDPNSSIKS. The segment at residues 196–208 is an intramembrane region (pore-forming); it reads VFDALWWAVVTAT. Residues 209-214 carry the Selectivity filter motif; it reads TVGYGD. The Extracellular segment spans residues 209 to 221; sequence TVGYGDVVPATPI. The helical transmembrane segment at 222–253 threads the bilayer; it reads GKVIGIAVMLTGISALTLLIGTVSNMFQKILV. Over 254-295 the chain is Cytoplasmic; that stretch reads GEPEPSCSPAKLAEMVSSMSEEEFEEFVRTLKNLRRLENSMK.

The protein belongs to the potassium channel family.

The protein localises to the cell membrane. Functionally, mediates a strong voltage-dependent potassium ion permeability of excitable membranes. Assuming opened or closed conformations in response to the voltage difference across the membrane, the protein forms a potassium-selective channel through which potassium ions may pass in accordance with their electrochemical gradient. This chain is Voltage-gated potassium channel, found in Aeropyrum pernix (strain ATCC 700893 / DSM 11879 / JCM 9820 / NBRC 100138 / K1).